Here is a 352-residue protein sequence, read N- to C-terminus: Quinolinate synthase (352 aa).

Positions 55 and 72 each coordinate iminosuccinate. C117 provides a ligand contact to [4Fe-4S] cluster. Residues 143-145 (YVN) and S160 contribute to the iminosuccinate site. C204 is a [4Fe-4S] cluster binding site. Residues 230–232 (HPE) and T258 contribute to the iminosuccinate site. C303 is a binding site for [4Fe-4S] cluster.

It belongs to the quinolinate synthase family. Type 2 subfamily. [4Fe-4S] cluster is required as a cofactor.

The protein localises to the cytoplasm. The enzyme catalyses iminosuccinate + dihydroxyacetone phosphate = quinolinate + phosphate + 2 H2O + H(+). It participates in cofactor biosynthesis; NAD(+) biosynthesis; quinolinate from iminoaspartate: step 1/1. Functionally, catalyzes the condensation of iminoaspartate with dihydroxyacetone phosphate to form quinolinate. This chain is Quinolinate synthase, found in Mycobacterium leprae (strain Br4923).